Here is a 24-residue protein sequence, read N- to C-terminus: LLKELWKKIKGAGKAVLGKIKGLL.

Belongs to the ponericin-L family. As to expression, expressed by the venom gland.

The protein resides in the secreted. Its function is as follows. Has a broad spectrum of activity against both Gram-positive and Gram-negative bacteria. Is inactive against yeast, erythrocytes, and insects. This is U1-poneritoxin-Ni2a from Neoponera inversa (Ant).